A 219-amino-acid polypeptide reads, in one-letter code: Guanylate kinase (219 aa).

A Guanylate kinase-like domain is found at 15-194 (GLMFVLSSPS…AFAEVHSILK (180 aa)). 22 to 29 (SPSGAGKT) contacts ATP.

The protein belongs to the guanylate kinase family.

The protein resides in the cytoplasm. It carries out the reaction GMP + ATP = GDP + ADP. Functionally, essential for recycling GMP and indirectly, cGMP. The chain is Guanylate kinase from Rhodopseudomonas palustris (strain BisB18).